The primary structure comprises 953 residues: Serine/threonine-protein kinase ppk30 (953 aa).

The Protein kinase domain maps to 57–326 (VIIQRYLSEG…IYQTLKEIME (270 aa)). ATP is bound by residues 63–71 (LSEGGFSHV) and Lys-85. Catalysis depends on Asp-187, which acts as the Proton acceptor. Disordered stretches follow at residues 343-402 (ASTY…PSVS), 427-451 (SPIP…RRAD), 538-606 (RFLP…NRMN), 641-669 (RKEP…NKDV), 748-791 (STSQ…RPIG), and 864-953 (RKSC…ESLE). Composition is skewed to polar residues over residues 355–369 (RTPS…SRPA), 378–402 (TVQT…PSVS), and 433–444 (KSYSATIQTPRS). A compositionally biased stretch (low complexity) spans 547 to 557 (PSEFSSSVGSK). The span at 558–575 (QNLSMDIPSVQNVSTKQK) shows a compositional bias: polar residues. A compositionally biased stretch (basic and acidic residues) spans 656 to 669 (LKKDQSSEVANKDV). The span at 748-766 (STSQVSHTQRLQQSISTSL) shows a compositional bias: polar residues. 3 stretches are compositionally biased toward basic and acidic residues: residues 767–778 (ERVKSNTKKESN), 865–884 (KSCE…DLER), and 937–953 (PHIE…ESLE). Phosphoserine is present on residues Ser-872 and Ser-875.

It belongs to the protein kinase superfamily. Ser/Thr protein kinase family.

The protein resides in the cytoplasm. The enzyme catalyses L-seryl-[protein] + ATP = O-phospho-L-seryl-[protein] + ADP + H(+). The catalysed reaction is L-threonyl-[protein] + ATP = O-phospho-L-threonyl-[protein] + ADP + H(+). The sequence is that of Serine/threonine-protein kinase ppk30 (ppk30) from Schizosaccharomyces pombe (strain 972 / ATCC 24843) (Fission yeast).